The following is a 165-amino-acid chain: Ubiquitin-like protein 4B (165 aa).

Residues 1-76 form the Ubiquitin-like domain; sequence MFLTVKLLLG…ISVVVRPLEK (76 aa). The interval 139–165 is disordered; it reads EPLAQPTGEREPEVLSPNKEEEKEAVQ. Residues 146 to 165 are compositionally biased toward basic and acidic residues; the sequence is GEREPEVLSPNKEEEKEAVQ.

The protein resides in the cytoplasm. This Bos taurus (Bovine) protein is Ubiquitin-like protein 4B (UBL4B).